A 258-amino-acid chain; its full sequence is Large ribosomal subunit protein uL3 (258 aa).

The protein belongs to the universal ribosomal protein uL3 family. As to quaternary structure, part of the 50S ribosomal subunit. Forms a cluster with proteins L14 and L19.

One of the primary rRNA binding proteins, it binds directly near the 3'-end of the 23S rRNA, where it nucleates assembly of the 50S subunit. The sequence is that of Large ribosomal subunit protein uL3 from Spiroplasma kunkelii.